Consider the following 392-residue polypeptide: Galactokinase (392 aa).

4 residues coordinate alpha-D-galactose: Arg-37, Glu-43, His-44, and Asp-46. ATP contacts are provided by Gly-136, Gly-138, Ser-140, and Ser-141. Asp-186 is a binding site for alpha-D-galactose. The active-site Proton acceptor is Asp-186. At Ser-230 the chain carries Phosphoserine. Residue Tyr-236 coordinates alpha-D-galactose.

This sequence belongs to the GHMP kinase family. GalK subfamily. As to quaternary structure, homodimer.

The enzyme catalyses alpha-D-galactose + ATP = alpha-D-galactose 1-phosphate + ADP + H(+). It participates in carbohydrate metabolism; galactose metabolism. Catalyzes the transfer of a phosphate from ATP to alpha-D-galactose and participates in the first committed step in the catabolism of galactose. The sequence is that of Galactokinase (GALK1) from Canis lupus familiaris (Dog).